The primary structure comprises 471 residues: Indole-3-acetate beta-glucosyltransferase (471 aa).

The active-site Proton acceptor is the His15. His15 contributes to the an anthocyanidin binding site. Asp107 functions as the Charge relay in the catalytic mechanism. Thr129, Gln344, His359, Trp362, Asn363, Ser364, Glu367, Asp383, and Gln384 together coordinate UDP-alpha-D-glucose.

Belongs to the UDP-glycosyltransferase family.

It catalyses the reaction (indol-3-yl)acetate + UDP-alpha-D-glucose = 1-O-(indol-3-ylacetyl)-beta-D-glucose + UDP. It functions in the pathway plant hormone metabolism; auxin conjugation. The chain is Indole-3-acetate beta-glucosyltransferase (IAGLU) from Zea mays (Maize).